Consider the following 346-residue polypeptide: DNA-directed RNA polymerases I and III subunit RPAC1 (346 aa).

Ala-2 bears the N-acetylalanine mark.

The protein belongs to the archaeal Rpo3/eukaryotic RPB3 RNA polymerase subunit family. Component of the RNA polymerase I and RNA polymerase III complexes consisting of at least 13 and 17 subunits, respectively. Pol I complex consists of a ten-subunit catalytic core composed of POLR1A/RPA1, POLR1B/RPA2, POLR1C/RPAC1, POLR1D/RPAC2, POLR1H/RPA12, POLR2E/RPABC1, POLR2F/RPABC2, POLR2H/RPABC3, POLR2K/RPABC4 and POLR2L/RPABC5; a mobile stalk subunit POLR1F/RPA43 protruding from the core and additional subunits homologous to general transcription factors POLR1E/RPA49 and POLR1G/RPA34. Part of Pol I pre-initiation complex (PIC), in which Pol I core assembles with RRN3 and promoter-bound UTBF and SL1/TIF-IB complex. Pol III complex consists of a ten-subunit catalytic core composed of POLR3A/RPC1, POLR3B/RPC2, POLR1C/RPAC1, POLR1D/RPAC2, POLR3K/RPC10, POLR2E/RPABC1, POLR2F/RPABC2, POLR2H/RPABC3, POLR2K/RPABC4 and POLR2L/RPABC5; a mobile stalk composed of two subunits POLR3H/RPC8 and CRCP/RPC9, protruding from the core and functioning primarily in transcription initiation; and additional subunits homologous to general transcription factors of the RNA polymerase II machinery, POLR3C/RPC3-POLR3F/RPC6-POLR3G/RPC7 heterotrimer required for transcription initiation and POLR3D/RPC4-POLR3E/RPC5 heterodimer involved in both transcription initiation and termination.

It is found in the nucleus. The protein resides in the cytoplasm. It localises to the cytosol. Its function is as follows. DNA-dependent RNA polymerase catalyzes the transcription of DNA into RNA using the four ribonucleoside triphosphates as substrates. Common component of RNA polymerases I and III which synthesize ribosomal RNA precursors and short non-coding RNAs including 5S rRNA, snRNAs, tRNAs and miRNAs, respectively. POLR1C/RPAC1 is part of the polymerase core and may function as a clamp element that moves to open and close the cleft. The chain is DNA-directed RNA polymerases I and III subunit RPAC1 (POLR1C) from Bos taurus (Bovine).